The chain runs to 259 residues: 3-deoxy-manno-octulosonate cytidylyltransferase (259 aa).

It belongs to the KdsB family.

Its subcellular location is the cytoplasm. It carries out the reaction 3-deoxy-alpha-D-manno-oct-2-ulosonate + CTP = CMP-3-deoxy-beta-D-manno-octulosonate + diphosphate. Its pathway is nucleotide-sugar biosynthesis; CMP-3-deoxy-D-manno-octulosonate biosynthesis; CMP-3-deoxy-D-manno-octulosonate from 3-deoxy-D-manno-octulosonate and CTP: step 1/1. It participates in bacterial outer membrane biogenesis; lipopolysaccharide biosynthesis. Functionally, activates KDO (a required 8-carbon sugar) for incorporation into bacterial lipopolysaccharide in Gram-negative bacteria. This Xanthomonas euvesicatoria pv. vesicatoria (strain 85-10) (Xanthomonas campestris pv. vesicatoria) protein is 3-deoxy-manno-octulosonate cytidylyltransferase.